Consider the following 435-residue polypeptide: DMATS-type prenyltransferase fscG (435 aa).

R111, K193, Y195, R259, K261, Y263, Y352, and Y423 together coordinate dimethylallyl diphosphate.

It belongs to the tryptophan dimethylallyltransferase family.

It functions in the pathway secondary metabolite biosynthesis. Its function is as follows. DMATS-type prenyltransferase; part of the fragmented gene cluster that mediates the biosynthesis of fusarochromene, a tryptophan-derived metabolite closely related to a group of mycotoxins including fusarochromanone. Within the pathway, fscG catalyzes the prenylation of the primary alcohol produced by fscA which is necessary for the formation of the chromene ring by the oxidoreductase fscI. The first step of the pathway is the epimerization of L-tryptophan to D-tryptophan in the presence of the NRPS-like tryptophan epimerase fscC. D-tryptophan is subsequently hydroxylated by the tryptophan 6-hydroxylase fscE to yield 6-hydroxytryptophan. The pyrrole ring undergoes cleavaged by the tryptophan 2,3-dioxygenase fscD and is finally converted to 4-hydroxykyrunenine by the hydrolase fscH. The NRPS-like oxidoreductase fscA reduces the carboxyl group to primary alcohol and the DMATS-type prenyltransferase fscG performs prenylation, followed by the formation of a chromene ring catalyzed by the oxidoreductase fscI, which leads to desacetylfusarochromene. Epoxidation by fscF and rearrangement reactions of chromene double bonds convert compound desacetylfusarochromene to fusarochromanones. Although specific acetyltransferases were not found near the fsc gene cluster, several predicted enzymes containing the N-acetyltransferase superfamily domain are present in the genome of F.equiseti. These predicted enzymes may have the potential to convert desacetylfusarochromene to fusarochromene. The polypeptide is DMATS-type prenyltransferase fscG (Fusarium equiseti (Fusarium scirpi)).